A 147-amino-acid polypeptide reads, in one-letter code: MVRSLLPLSWRRCASDSSNSSTNDDIIVDYDGPDLPLPEYPNRPNEPLGMRKQRLLYQSRKRGMLENDLLLSTFAHKYLKDFDEDETAIYDELINGVSNDWDIYYWATGVKPTPPQYETDIMELLKQHVKNTEKVARFRQPELTYYL.

Belongs to the SDHAF2 family. Interacts with the flavoprotein subunit within the SDH catalytic dimer.

It is found in the mitochondrion matrix. Plays an essential role in the assembly of succinate dehydrogenase (SDH), an enzyme complex (also referred to as respiratory complex II) that is a component of both the tricarboxylic acid (TCA) cycle and the mitochondrial electron transport chain, and which couples the oxidation of succinate to fumarate with the reduction of ubiquinone (coenzyme Q) to ubiquinol. Required for flavinylation (covalent attachment of FAD) of the flavoprotein subunit of the SDH catalytic dimer. The protein is Succinate dehydrogenase assembly factor 2, mitochondrial of Drosophila grimshawi (Hawaiian fruit fly).